The chain runs to 143 residues: Transcriptional regulator MraZ (143 aa).

SpoVT-AbrB domains lie at 5-47 and 76-119; these read EYKH…SLKE and ACEC…SEEN.

It belongs to the MraZ family. As to quaternary structure, forms oligomers.

Its subcellular location is the cytoplasm. The protein resides in the nucleoid. This chain is Transcriptional regulator MraZ, found in Caldicellulosiruptor saccharolyticus (strain ATCC 43494 / DSM 8903 / Tp8T 6331).